The sequence spans 240 residues: MSTLFIADLHLSVQEPAITAGFLHFIQREAIHADALYILGDLFESWIGDDDPEPLYRQVAAALKSLQQQGVPCYFIHGNRDFLLGKRFAEESGMVLLPEENVVELYGRKILILHGDTLCTDDTDYQHFRKKVHNPLIQKLFLWIPLRLRLRIAAYMRNKSQQNNSGKSERIMDVNSKAVIDAFLRHDVSWMIHGHTHRPAIHSVELPMVTAHRVVLGAWHVEGSMVKVTADNVELITFPF.

Mn(2+) is bound by residues aspartate 8, histidine 10, aspartate 41, asparagine 79, and histidine 114. 79 to 80 serves as a coordination point for substrate; sequence NR. Aspartate 122, serine 160, asparagine 164, lysine 167, and histidine 195 together coordinate substrate. Mn(2+) is bound by residues histidine 195 and histidine 197.

Belongs to the LpxH family. Mn(2+) is required as a cofactor.

Its subcellular location is the cell inner membrane. The enzyme catalyses UDP-2-N,3-O-bis[(3R)-3-hydroxytetradecanoyl]-alpha-D-glucosamine + H2O = 2-N,3-O-bis[(3R)-3-hydroxytetradecanoyl]-alpha-D-glucosaminyl 1-phosphate + UMP + 2 H(+). It participates in glycolipid biosynthesis; lipid IV(A) biosynthesis; lipid IV(A) from (3R)-3-hydroxytetradecanoyl-[acyl-carrier-protein] and UDP-N-acetyl-alpha-D-glucosamine: step 4/6. Functionally, hydrolyzes the pyrophosphate bond of UDP-2,3-diacylglucosamine to yield 2,3-diacylglucosamine 1-phosphate (lipid X) and UMP by catalyzing the attack of water at the alpha-P atom. Involved in the biosynthesis of lipid A, a phosphorylated glycolipid that anchors the lipopolysaccharide to the outer membrane of the cell. The protein is UDP-2,3-diacylglucosamine hydrolase of Yersinia pestis bv. Antiqua (strain Angola).